A 156-amino-acid chain; its full sequence is Longistatin (156 aa).

A signal peptide spans 1-21; it reads MTHRRLLWALCVAALLGVVAA. EF-hand domains lie at 70–105 and 123–156; these read SQDE…TNHH and DIAS…TNQI. Ca(2+)-binding residues include Asp83, Asp85, Asn87, Lys89, Glu94, Asp135, Asn137, Asp139, Phe141, and Glu146.

As to quaternary structure, interacts with host fibrin. Interacts with human RAGE/AGER. In terms of tissue distribution, saliva (at protein level). Salivary gland (at protein level). Not detected in midgut, ovary, trachea, Malpighian tubule system, synganglion and cuticle.

It localises to the secreted. It is found in the cytoplasm. With respect to regulation, resistant to inhibition by host SERPINE1. Inhibited by PMSF, aprotinin, antipain and leupeptin. Inhibited by Zn(2+). Anticoagulant and fibrinolytic protease that modulates blood feeding of ticks on vertebrate hosts. Degrades host fibrinogen and delays fibrin clot formation. Promotes lysis of fibrin clots in the host by activating host plasminogen in the presence of soluble fibrin. Binds Ca(2+). Hydrolyzes serine protease-specific substrates. Required for the formation of a blood pool, an accumulation of blood and tissue fluid developed at the tick's feeding site. Blocks activation of host AGER/RAGE. Reduces AGER/RAGE-dependent production of reactive oxygen species (ROS) in human endothelial cells. Prevents AGER/RAGE-dependent activation of NF-kappa-B and suppresses expression of adhesion molecules, such as VCAM1, ICAM1 and SELE, and secretion of cytokines, such as CSF3/GCSF and TGF-beta, in human endothelial cells. Suppresses RAGE/AGER-mediated migration of mouse peritoneal resident cells. Reduces AGER/RAGE-mediated inflammation in mice tissues. In Haemaphysalis longicornis (Bush tick), this protein is Longistatin.